The chain runs to 409 residues: Translation initiation factor 2 subunit gamma (409 aa).

Residues 6–203 enclose the tr-type G domain; it reads QPEVNIGLVG…AVQSEIPTPE (198 aa). The tract at residues 15–22 is G1; it reads GHVDHGKT. 4 residues coordinate Mg(2+): Asp18, Thr22, Gly43, and Ser45. 18–23 contributes to the GTP binding site; it reads DHGKTT. A G2 region spans residues 43–47; the sequence is GISIR. The interval 90-93 is G3; the sequence is DAPG. Residues 146-149 and 181-183 each bind GTP; these read NKVD and SAG. Residues 146-149 form a G4 region; the sequence is NKVD. The interval 181-183 is G5; sequence SAG.

This sequence belongs to the TRAFAC class translation factor GTPase superfamily. Classic translation factor GTPase family. EIF2G subfamily. In terms of assembly, heterotrimer composed of an alpha, a beta and a gamma chain. The cofactor is Mg(2+).

It carries out the reaction GTP + H2O = GDP + phosphate + H(+). Functionally, eIF-2 functions in the early steps of protein synthesis by forming a ternary complex with GTP and initiator tRNA. This Haloarcula marismortui (strain ATCC 43049 / DSM 3752 / JCM 8966 / VKM B-1809) (Halobacterium marismortui) protein is Translation initiation factor 2 subunit gamma.